A 570-amino-acid polypeptide reads, in one-letter code: MSEHKWWKEAVVYQIWPASYKDSNGDGVGDIPGIISTLDYIASLGVTTVWLSPMYDSPQDDMGYDVSDYENVYSKYGTLQDMDRLIAGCHDRGLKLILDLVINHTSVEHKWFKESRSSKDNPKRDWYIWKPPRIDSNGNKHPPNNWGSYFSGSAWKYDELTGEYYLHLFAESQPDLNWENKECREAIYNSAIKFWLDKGVDGFRIDTAGMYSKYQHFKDAPVAFPDTEFQPCEIYHKNGPRIHEFHKEMAKVMEPYDTMTVGEVGHSTREQALKYVSAAEKEMNMMFLFDVVELGSDPRDRFRYNGFDLVDLKKAIKSQGEFAEGTDAWSTVFIENHDQARAISRFGNDSPEFRVLSGKAIAMLQCCLTGTLFIYQGQEIGMTNVPRSWPIEEYKDINTINYYRAFKEKYGKDADYKQKEEKLVDVINRLARDNARTPVQWSHQQYAGFSEVEPWMRVNDNYKEINVEDQDGDDHSLLNFYRKLLKLRGEYKDLFVYGEMKFLDFDDKKLFTFAKEAPGSPVAYIVINFSGEDVKFEPLIKGNYKLVLTNVDKDSKDALSPYEARMYVVD.

Aspartate 206 serves as the catalytic Nucleophile. Glutamate 263 functions as the Proton donor in the catalytic mechanism.

The protein belongs to the glycosyl hydrolase 13 family.

The catalysed reaction is Hydrolysis of terminal, non-reducing (1-&gt;4)-linked alpha-D-glucose residues with release of alpha-D-glucose.. The protein is Alpha-glucosidase (MAL2) of Candida albicans (Yeast).